The primary structure comprises 222 residues: MTIHTSRIIMSTDAFLTLTQWLSPGFPVGAYAYSHGLEQVIDCGDMRDAKALQDWVEDILEHGSGTSDGILLAASYKALPEDVSRIDAIARAFASSAERVTETVDQGAAFAKAVDAIWATDLGQLCYPVAVGRAACAQGLPLDLTLEIYTHAFAANLVSAAVRLVPLGQTEGQAVLAALAPLIRQVARRCHDAGIDDLTTACMALDIAAMHHETQYSKVFRT.

Belongs to the UreF family. As to quaternary structure, ureD, UreF and UreG form a complex that acts as a GTP-hydrolysis-dependent molecular chaperone, activating the urease apoprotein by helping to assemble the nickel containing metallocenter of UreC. The UreE protein probably delivers the nickel.

The protein resides in the cytoplasm. Functionally, required for maturation of urease via the functional incorporation of the urease nickel metallocenter. The chain is Urease accessory protein UreF from Roseobacter denitrificans (strain ATCC 33942 / OCh 114) (Erythrobacter sp. (strain OCh 114)).